A 268-amino-acid polypeptide reads, in one-letter code: Undecaprenyl-diphosphatase (268 aa).

Helical transmembrane passes span 47–67, 83–103, 109–129, 144–164, 184–204, 218–238, and 246–266; these read FAIL…FFKL, FIIG…IAGK, LFDP…LLWV, YPLL…IPGV, AAEF…VYDF, LVAI…KAFL, and FVLF…ALAL.

It belongs to the UppP family.

The protein resides in the cell inner membrane. The catalysed reaction is di-trans,octa-cis-undecaprenyl diphosphate + H2O = di-trans,octa-cis-undecaprenyl phosphate + phosphate + H(+). Functionally, catalyzes the dephosphorylation of undecaprenyl diphosphate (UPP). Confers resistance to bacitracin. The sequence is that of Undecaprenyl-diphosphatase from Bradyrhizobium sp. (strain BTAi1 / ATCC BAA-1182).